The sequence spans 294 residues: Nucleotide-binding protein CLK_2809 (294 aa).

An ATP-binding site is contributed by 8-15; sequence GLSGAGKT. Residue 59–62 participates in GTP binding; the sequence is DIRG.

This sequence belongs to the RapZ-like family.

In terms of biological role, displays ATPase and GTPase activities. This chain is Nucleotide-binding protein CLK_2809, found in Clostridium botulinum (strain Loch Maree / Type A3).